A 679-amino-acid chain; its full sequence is Protein hook (679 aa).

The interval 1–155 (MSAPKNEMYY…NIMRALQELE (155 aa)) is interaction with microtubules. The 118-residue stretch at 6–123 (NEMYYSLLEW…RLLQLVLGCA (118 aa)) folds into the Calponin-homology (CH) domain. Coiled coils occupy residues 135 to 437 (EIMC…LKCG) and 480 to 574 (QTAL…QEIL).

It belongs to the hook family. Homodimer. Interacts with microtubules via its N-terminus.

The protein resides in the cytoplasm. It localises to the cytoskeleton. Its subcellular location is the endosome. It is found in the synapse. In terms of biological role, involved in endocytic trafficking by stabilizing organelles of the endocytic pathway. Probably acts as a cytoskeletal linker protein required to tether endosome vesicles to the cytoskeleton. Involved in modulation of endocytosis at stages required for down-regulation of membrane proteins that control synapse size. Not involved in synaptic vesicle recycling. Required in R7 cells for boss endocytosis into multivesicular bodies (MVBs). Has a role in regulating adult longevity. The protein is Protein hook of Drosophila melanogaster (Fruit fly).